A 257-amino-acid polypeptide reads, in one-letter code: MRPLVIKLGGILLDTPAAMENLFNALAKYLQNSDRSLLIVHGGGCVVDDLMKRLNLPVRKKNGLRVTPSDQIDIIVGALAGIANKTLVAQAAKFKLNPVGLCLGDGELTAAKQFDPELGHVAGVIARNPALLDNLLSGGFLPIISSIAVDENGLLMNVNADQAATAIASLIDADLVMLSDVDGVLDADKTLLSELNSAQIARLIENKVITDGMIVKVNAALDAAKILNRGVDIANWKYPEKLTALFAGEIIGTRIAP.

Substrate contacts are provided by residues 43–44 (GG), R65, and N157.

The protein belongs to the acetylglutamate kinase family. ArgB subfamily.

It localises to the cytoplasm. The enzyme catalyses N-acetyl-L-glutamate + ATP = N-acetyl-L-glutamyl 5-phosphate + ADP. Its pathway is amino-acid biosynthesis; L-arginine biosynthesis; N(2)-acetyl-L-ornithine from L-glutamate: step 2/4. Functionally, catalyzes the ATP-dependent phosphorylation of N-acetyl-L-glutamate. The chain is Acetylglutamate kinase from Actinobacillus succinogenes (strain ATCC 55618 / DSM 22257 / CCUG 43843 / 130Z).